A 101-amino-acid polypeptide reads, in one-letter code: Large ribosomal subunit protein bL21 (101 aa).

It belongs to the bacterial ribosomal protein bL21 family. As to quaternary structure, part of the 50S ribosomal subunit. Contacts protein L20.

In terms of biological role, this protein binds to 23S rRNA in the presence of protein L20. The chain is Large ribosomal subunit protein bL21 from Corynebacterium aurimucosum (strain ATCC 700975 / DSM 44827 / CIP 107346 / CN-1) (Corynebacterium nigricans).